A 383-amino-acid chain; its full sequence is 8-amino-7-oxononanoate synthase (383 aa).

Positions 27 and 34 each coordinate substrate. Pyridoxal 5'-phosphate is bound at residue 114-115 (GY). H139 lines the substrate pocket. Residues S187, 212-215 (DDAH), and 232-235 (TLSK) each bind pyridoxal 5'-phosphate. K235 carries the post-translational modification N6-(pyridoxal phosphate)lysine. T344 is a binding site for substrate.

It belongs to the class-II pyridoxal-phosphate-dependent aminotransferase family. BioF subfamily. In terms of assembly, homodimer. It depends on pyridoxal 5'-phosphate as a cofactor.

It carries out the reaction 6-carboxyhexanoyl-[ACP] + L-alanine + H(+) = (8S)-8-amino-7-oxononanoate + holo-[ACP] + CO2. The protein operates within cofactor biosynthesis; biotin biosynthesis. In terms of biological role, catalyzes the decarboxylative condensation of pimeloyl-[acyl-carrier protein] and L-alanine to produce 8-amino-7-oxononanoate (AON), [acyl-carrier protein], and carbon dioxide. In Methylorubrum extorquens (strain PA1) (Methylobacterium extorquens), this protein is 8-amino-7-oxononanoate synthase.